The following is a 98-amino-acid chain: Co-chaperonin GroES (98 aa).

It belongs to the GroES chaperonin family. In terms of assembly, heptamer of 7 subunits arranged in a ring. Interacts with the chaperonin GroEL.

It is found in the cytoplasm. In terms of biological role, together with the chaperonin GroEL, plays an essential role in assisting protein folding. The GroEL-GroES system forms a nano-cage that allows encapsulation of the non-native substrate proteins and provides a physical environment optimized to promote and accelerate protein folding. GroES binds to the apical surface of the GroEL ring, thereby capping the opening of the GroEL channel. The protein is Co-chaperonin GroES of Renibacterium salmoninarum (strain ATCC 33209 / DSM 20767 / JCM 11484 / NBRC 15589 / NCIMB 2235).